The chain runs to 418 residues: Phosphatidylcholine:ceramide cholinephosphotransferase 1 (418 aa).

One can recognise an SAM domain in the interval 12–75 (WSPKKVADWL…LDMIETLKME (64 aa)). At Ser-13 the chain carries Phosphoserine. Transmembrane regions (helical) follow at residues 141–161 (FLAF…ISVV), 189–209 (FSIC…QWLL), 220–240 (FFCI…VTTL), 281–301 (MCGD…YLFI), and 309–329 (LWWY…CILL). The active site involves His-290. Active-site residues include His-333 and Asp-337. A helical membrane pass occupies residues 335 to 352 (TVDVVVAYYITTRLFWWY).

Belongs to the sphingomyelin synthase family. Widely expressed. Highest expression in the cardiovascular system.

It localises to the golgi apparatus membrane. The catalysed reaction is an N-acylsphing-4-enine + a 1,2-diacyl-sn-glycero-3-phosphocholine = a sphingomyelin + a 1,2-diacyl-sn-glycerol. The enzyme catalyses 1-(9Z-octadecenoyl)-2-acyl-sn-3-glycerol + a sphingomyelin = a 1-(9Z-octadecenoyl)-2-acyl-sn-glycero-3-phosphocholine + an N-acylsphing-4-enine. It catalyses the reaction N-hexadecanoylsphinganine + a 1,2-diacyl-sn-glycero-3-phosphocholine = N-hexadecanoyl-sphinganine-1-phosphocholine + a 1,2-diacyl-sn-glycerol. It carries out the reaction N-hexadecanoyl-(4R)-hydroxysphinganine + a 1,2-diacyl-sn-glycero-3-phosphocholine = N-hexadecanoyl-(4R)-hydroxysphinganine-phosphocholine + a 1,2-diacyl-sn-glycerol. The catalysed reaction is an N-acylsphing-4-enine + a 1,2-diacyl-sn-glycero-3-phosphoethanolamine = an N-acylsphing-4-enine 1-phosphoethanolamine + a 1,2-diacyl-sn-glycerol. It functions in the pathway sphingolipid metabolism. Major sphingomyelin synthase at the Golgi apparatus. Catalyzes the reversible transfer of phosphocholine moiety in sphingomyelin biosynthesis: in the forward reaction transfers phosphocholine head group of phosphatidylcholine (PC) on to ceramide (CER) to form ceramide phosphocholine (sphingomyelin, SM) and diacylglycerol (DAG) as by-product, and in the reverse reaction transfers phosphocholine from SM to DAG to form PC and CER. The direction of the reaction depends on the levels of CER and DAG in Golgi membranes. Converts the newly synthesized CER, that is transported from the endoplasmic reticulum to the trans-Golgi by the Cer transport protein (CERT), to SM. Can form a heteromeric complex with glucosylceramide synthase (GCS) increasing SMS activity and reducing glucosylceramide synthesis, a critical mechanism that controls the metabolic fate of CER in the Golgi. Does not use free phosphorylcholine or CDP-choline as donor. Can also transfer phosphoethanolamine head group of phosphatidylethanolamine (PE) on to CER to form ceramide phosphoethanolamine (CPE). Regulates receptor-mediated signal transduction via mitogenic DAG and proapoptotic CER, as well as via SM, a structural component of membrane rafts that serve as platforms for signal transduction and protein sorting. Plays a role in secretory transport via regulation of DAG pool at the Golgi apparatus and its downstream effects on PRKD1. This is Phosphatidylcholine:ceramide cholinephosphotransferase 1 (SGMS1) from Sus scrofa (Pig).